The chain runs to 253 residues: CENP-A recruiting complex protein mis20 (253 aa).

The interval 113–136 (TGPTTSKNKHPSHSNTIRSPPYKV) is disordered.

As to quaternary structure, component of the CENP-A recruiting complex composed of at least mis16, mis19, mis19 and mis20.

The protein resides in the cytoplasm. It localises to the cytoskeleton. The protein localises to the microtubule organizing center. Its subcellular location is the spindle pole body. It is found in the chromosome. The protein resides in the centromere. Functionally, component of the CENP-A recruiting complex that ensures the integrity of mitotic spindles through maintenance of kinetochore factors mis6/CENP-I and cnp1/CENP-A. Seems dispensable for proper chromosome segregation. This is CENP-A recruiting complex protein mis20 from Schizosaccharomyces pombe (strain 972 / ATCC 24843) (Fission yeast).